Consider the following 204-residue polypeptide: Small ribosomal subunit protein uS7 (204 aa).

Met1 carries the N-acetylmethionine modification. Residue Thr2 is modified to N-acetylthreonine; in 40S ribosomal protein S5, N-terminally processed. Position 14 is a phosphothreonine (Thr14). At Lys47 the chain carries N6-acetyllysine; alternate. Residue Lys47 forms a Glycyl lysine isopeptide (Lys-Gly) (interchain with G-Cter in SUMO2); alternate linkage. The residue at position 142 (Ser142) is a Phosphoserine.

This sequence belongs to the universal ribosomal protein uS7 family. As to quaternary structure, component of the small ribosomal subunit. Part of the small subunit (SSU) processome, composed of more than 70 proteins and the RNA chaperone small nucleolar RNA (snoRNA) U3.

The protein localises to the cytoplasm. The protein resides in the nucleus. It localises to the nucleolus. Its function is as follows. Component of the small ribosomal subunit. The ribosome is a large ribonucleoprotein complex responsible for the synthesis of proteins in the cell. Part of the small subunit (SSU) processome, first precursor of the small eukaryotic ribosomal subunit. During the assembly of the SSU processome in the nucleolus, many ribosome biogenesis factors, an RNA chaperone and ribosomal proteins associate with the nascent pre-rRNA and work in concert to generate RNA folding, modifications, rearrangements and cleavage as well as targeted degradation of pre-ribosomal RNA by the RNA exosome. The polypeptide is Small ribosomal subunit protein uS7 (Rps5) (Rattus norvegicus (Rat)).